Here is a 354-residue protein sequence, read N- to C-terminus: Guanine nucleotide-binding protein G(o) subunit alpha (354 aa).

The N-myristoyl glycine moiety is linked to residue glycine 2. Residue cysteine 3 is the site of S-palmitoyl cysteine attachment. In terms of domain architecture, G-alpha spans 32–354 (KDIKLLLLGA…ANNLRGCGLY (323 aa)). A G1 motif region spans residues 35–48 (KLLLLGAGESGKST). GTP is bound by residues 40–47 (GAGESGKS), 176–182 (LRTRVKT), 201–205 (DVGGQ), 270–273 (NKKD), and alanine 326. Serine 47 and threonine 182 together coordinate Mg(2+). The interval 174–182 (DILRTRVKT) is G2 motif. The interval 197–206 (FKLFDVGGQR) is G3 motif. The segment at 266 to 273 (ILFLNKKD) is G4 motif. The interval 324-329 (TCATDT) is G5 motif.

It belongs to the G-alpha family. G(i/o/t/z) subfamily. As to quaternary structure, g proteins are composed of 3 units; alpha, beta and gamma. The alpha chain contains the guanine nucleotide binding site.

Functionally, guanine nucleotide-binding proteins (G proteins) are involved as modulators or transducers in various transmembrane signaling systems. The G(o) protein function is not clear. The sequence is that of Guanine nucleotide-binding protein G(o) subunit alpha from Lymnaea stagnalis (Great pond snail).